Reading from the N-terminus, the 407-residue chain is Putative aspartate aminotransferase, cytoplasmic 2 (407 aa).

Position 249 is an N6-(pyridoxal phosphate)lysine (Lys249).

It belongs to the class-I pyridoxal-phosphate-dependent aminotransferase family. As to quaternary structure, homodimer. Pyridoxal 5'-phosphate is required as a cofactor.

It localises to the cytoplasm. The catalysed reaction is L-aspartate + 2-oxoglutarate = oxaloacetate + L-glutamate. The polypeptide is Putative aspartate aminotransferase, cytoplasmic 2 (GOT1L1) (Bos taurus (Bovine)).